We begin with the raw amino-acid sequence, 191 residues long: Protein hugin (191 aa).

The first 24 residues, 1-24 (MCGPSYCTLLLIAASCYILVCSHA), serve as a signal peptide directing secretion. Positions 25 to 119 (KSLQGTSKLD…LTYYLLLQKL (95 aa)) are excised as a propeptide. Leu137 and Leu181 each carry leucine amide. The propeptide occupies 185-191 (AQVCGGD).

Belongs to the pyrokinin family. In terms of tissue distribution, expressed in a subgroup of neurosecretory cells in the subesophageal ganglion from embryonic stage 9 to larval stages.

The protein localises to the secreted. In terms of biological role, probably has a role in larval molting. This is Protein hugin (Hug) from Drosophila melanogaster (Fruit fly).